The sequence spans 107 residues: High mobility group protein HMG-I/HMG-Y (107 aa).

The disordered stretch occupies residues 1–107 (MSESSSKSSQ…ISQESSEEEQ (107 aa)). Residue Ser-2 is modified to N-acetylserine. Position 7 is an N6-acetyllysine (Lys-7). ADP-ribosylserine is present on Ser-8. The residue at position 9 (Ser-9) is an ADP-ribosylserine; alternate. Ser-9 bears the Phosphoserine; alternate mark. The residue at position 15 (Lys-15) is an N6-acetyllysine; alternate. Lys-15 is covalently cross-linked (Glycyl lysine isopeptide (Lys-Gly) (interchain with G-Cter in SUMO2); alternate). The span at 15 to 24 (KQEKDGTEKR) shows a compositional bias: basic and acidic residues. A DNA-binding region (a.T hook 1) is located at residues 21–31 (TEKRGRGRPRK). Asymmetric dimethylarginine; alternate is present on Arg-26. Arg-26 carries the omega-N-methylarginine; alternate modification. Arg-26 is subject to Symmetric dimethylarginine; alternate. Ser-36 is modified (phosphoserine; by HIPK2 and CDC2). Thr-39 is modified (phosphothreonine). Ser-44 and Ser-49 each carry phosphoserine. At Thr-53 the chain carries Phosphothreonine; by HIPK2 and CDC2. DNA-binding regions (a.T hook) lie at residues 53–63 (TPKRPRGRPKG) and 78–89 (APGRKPRGRPKK). An interaction with HIPK2 region spans residues 53–77 (TPKRPRGRPKGSKNKGAAKTRKATT). Residues 55–74 (KRPRGRPKGSKNKGAAKTRK) show a composition bias toward basic residues. Arg-58 and Arg-60 each carry asymmetric dimethylarginine; by PRMT6; alternate. 2 positions are modified to omega-N-methylarginine; by PRMT6; alternate: Arg-58 and Arg-60. The span at 93-107 (EEEEGISQESSEEEQ) shows a compositional bias: acidic residues. Ser-99, Ser-102, and Ser-103 each carry phosphoserine.

The protein belongs to the HMGA family. In terms of assembly, interacts with HIPK2. Post-translationally, isoforms HMG-I and HMG-Y can be phosphorylated by HIPK2. Phosphorylation may modulate DNA-binding affinity. Methylation at Arg-58 is mutually exclusive with methylation at Arg-60.

The protein localises to the nucleus. The protein resides in the chromosome. HMG-I/Y bind preferentially to the minor groove of A+T rich regions in double-stranded DNA. It is suggested that these proteins could function in nucleosome phasing and in the 3'-end processing of mRNA transcripts. They are also involved in the transcription regulation of genes containing, or in close proximity to A+T-rich regions. In Cricetulus griseus (Chinese hamster), this protein is High mobility group protein HMG-I/HMG-Y (HMGA1).